Consider the following 150-residue polypeptide: MRIVLQKVSEASVTVGSAVVSQIKHGYMLLVGIGTDDKLEDIDKLSKKILTFRGFDDDAGYGWKRNISEVDGEILCVSQFTLMARTSKGTKPDFHLAQRGELANELYGQFMDKLKAGLGDDKVQNGVFGAMMSCKLTNEGPVTIIFDSKA.

Residues Gly140–Pro141 carry the Gly-cisPro motif, important for rejection of L-amino acids motif.

The protein belongs to the DTD family. Homodimer.

It is found in the cytoplasm. It catalyses the reaction glycyl-tRNA(Ala) + H2O = tRNA(Ala) + glycine + H(+). The enzyme catalyses a D-aminoacyl-tRNA + H2O = a tRNA + a D-alpha-amino acid + H(+). An aminoacyl-tRNA editing enzyme that deacylates mischarged D-aminoacyl-tRNAs. Also deacylates mischarged glycyl-tRNA(Ala), protecting cells against glycine mischarging by AlaRS. Acts via tRNA-based rather than protein-based catalysis; rejects L-amino acids rather than detecting D-amino acids in the active site. By recycling D-aminoacyl-tRNA to D-amino acids and free tRNA molecules, this enzyme counteracts the toxicity associated with the formation of D-aminoacyl-tRNA entities in vivo and helps enforce protein L-homochirality. In Kluyveromyces lactis (strain ATCC 8585 / CBS 2359 / DSM 70799 / NBRC 1267 / NRRL Y-1140 / WM37) (Yeast), this protein is D-aminoacyl-tRNA deacylase (DTD1).